Consider the following 415-residue polypeptide: MFS-type transporter FVEG_12626 (415 aa).

Over residues 1 to 18 (MDPDTEQMRVEKPNHEQP) the composition is skewed to basic and acidic residues. Residues 1 to 22 (MDPDTEQMRVEKPNHEQPKPNT) form a disordered region. Transmembrane regions (helical) follow at residues 27-47 (GGFK…VGVF), 63-83 (TVSW…PFVG), 93-113 (YLLL…SISS), 118-138 (YILS…YPSF), 151-171 (LALG…PIVV), and 178-198 (IGFG…LLVT). Asn-199 carries an N-linked (GlcNAc...) asparagine glycan. Helical transmembrane passes span 227-247 (FILT…PITF), 264-284 (YLVS…GYIA), 290-310 (FNVS…LWLP), 318-338 (IAFA…SPAL), 354-374 (TMYA…GALI), and 386-406 (VFAG…RLYI).

This sequence belongs to the major facilitator superfamily. Monocarboxylate porter (TC 2.A.1.13) family.

The protein localises to the membrane. Its function is as follows. MFS-type transporter; part of the Fusarium detoxification of benzoxazolinone cluster 2 (FDB2) involved in the degradation of benzoxazolinones produced by the host plant. Maize, wheat, and rye produce the 2 benzoxazinone phytoanticipins 2,4-dihy-droxy-7-methoxy-1,4-benzoxazin-3-one (DIMBOA) and 2,4-dihydroxy-1,4-benzoxazin-3-one (DIBOA) that, due to their inherent instability once released, spontaneously degrade to the more stable corresponding benzoxazolinones, 6-methoxy-2-benzoxazolinone (MBOA) and 2-benzoxazolinone (BOA), respectively. The chain is MFS-type transporter FVEG_12626 from Gibberella moniliformis (strain M3125 / FGSC 7600) (Maize ear and stalk rot fungus).